The following is a 251-amino-acid chain: Eukaryotic translation initiation factor 4E-3 (251 aa).

Residues 200-251 form a disordered region; sequence DSSARTSSTVKPRICLPAKDPAPVKEKGPAATTSPSNPGTEATGTSPATPTP. Positions 230 to 251 are enriched in polar residues; that stretch reads ATTSPSNPGTEATGTSPATPTP.

The protein belongs to the eukaryotic initiation factor 4E family. As to quaternary structure, eIF4F is a multi-subunit complex, the composition of which varies with external and internal environmental conditions. It is composed of at least eIF4A, eIF4E and eIF4G. eIF4E is also known to interact with other partners. Interacts with mxt. Component of the pid-1 variant of the PETISCO complex (also called the pid-3, erh-2, tofu-6, and ife-3 small RNA complex) containing at least pid-1, tofu-6, ife-3, pid-3, and erh-2, which is required for the biogenesis of a class of 21 nucleotide PIWI-interacting RNAs (piRNAs) that possess a uracil residue at the 5'-end (also called 21U-RNAs). Component of the tost-1 variant of the PETISCO complex (also called the pid-3, erh-2, tofu-6, and ife-3 small RNA complex) containing at least tost-1, tofu-6, ife-3, pid-3, and erh-2, which plays an essential role in embryogenesis. Within the pid-1 and tost-1 variants of the PETISCO complexes interacts with tofu-6 (via C-terminus). In contrast to the pid-1 variant of the PETISCO complex, the tost-1 variant of the PETISCO complex plays a minor role in the biogenesis of 21U-RNAs. As to expression, highly expressed in the germline (at protein level).

It localises to the cytoplasmic granule. Its subcellular location is the cytoplasm. The protein resides in the perinuclear region. Recognizes and binds the 7-methylguanosine-containing mRNA cap during an early step in the initiation of protein synthesis and facilitates ribosome binding by inducing the unwinding of the mRNAs secondary structures. All 5 eIF4E proteins bind monomethyl cap structures. Only ife-1, ife-2 and ife-5 bind trimethyl cap structures which result from trans-splicing. Translation of trimethyl cap structure mRNAs may be regulated by intracellular redox state; disulfide bonds change the width and depth of the cap-binding cavity determining selectivity to mRNA caps. Ife-3 is essential for viability. Component of the pid-1 and tost-1 variants of the PETISCO complexes, which have roles in the biogenesis of a class of 21 nucleotide PIWI-interacting RNAs (piRNAs) that possess a uracil residue at the 5'-end (also called 21U-RNAs) and embryogenesis, respectively. Within the pid-1 variant of the PETISCO complex binds to capped 21U-RNA precursor molecules, possibly playing a role in the processing of the 5' end of the molecules to promote binding of other complex components such as pid-3. However, it is not essential for the biogenesis of 21U-RNAs by itself. Within the tost-1 variant of the PETISCO complex binds to splice leader SL1 RNA fragments to possibly play a role in their processing. This chain is Eukaryotic translation initiation factor 4E-3, found in Caenorhabditis elegans.